The following is a 367-amino-acid chain: 2-aminoethylphosphonate--pyruvate transaminase (367 aa).

K194 is modified (N6-(pyridoxal phosphate)lysine).

The protein belongs to the class-V pyridoxal-phosphate-dependent aminotransferase family. PhnW subfamily. In terms of assembly, homodimer. Pyridoxal 5'-phosphate is required as a cofactor.

The catalysed reaction is (2-aminoethyl)phosphonate + pyruvate = phosphonoacetaldehyde + L-alanine. In terms of biological role, involved in phosphonate degradation. The sequence is that of 2-aminoethylphosphonate--pyruvate transaminase from Salmonella heidelberg (strain SL476).